Reading from the N-terminus, the 670-residue chain is UvrABC system protein B (670 aa).

Residues 26–183 (NGLKSGLAFQ…QRLVDLQYNR (158 aa)) form the Helicase ATP-binding domain. 39–46 (GVTGSGKT) serves as a coordination point for ATP. A Beta-hairpin motif is present at residues 92-115 (YYDYYQPEAYVPSSDSFIEKDAAI). The 167-residue stretch at 431 to 597 (QVDDLLSEIN…GLSKQVNDVM (167 aa)) folds into the Helicase C-terminal domain. The region spanning 630 to 665 (LKQIALSEKQMFACAKNLEFEKAALFRDEVTKLHEQ) is the UVR domain.

This sequence belongs to the UvrB family. In terms of assembly, forms a heterotetramer with UvrA during the search for lesions. Interacts with UvrC in an incision complex.

The protein localises to the cytoplasm. Functionally, the UvrABC repair system catalyzes the recognition and processing of DNA lesions. A damage recognition complex composed of 2 UvrA and 2 UvrB subunits scans DNA for abnormalities. Upon binding of the UvrA(2)B(2) complex to a putative damaged site, the DNA wraps around one UvrB monomer. DNA wrap is dependent on ATP binding by UvrB and probably causes local melting of the DNA helix, facilitating insertion of UvrB beta-hairpin between the DNA strands. Then UvrB probes one DNA strand for the presence of a lesion. If a lesion is found the UvrA subunits dissociate and the UvrB-DNA preincision complex is formed. This complex is subsequently bound by UvrC and the second UvrB is released. If no lesion is found, the DNA wraps around the other UvrB subunit that will check the other stand for damage. This chain is UvrABC system protein B, found in Psychromonas ingrahamii (strain DSM 17664 / CCUG 51855 / 37).